A 486-amino-acid polypeptide reads, in one-letter code: Stretch-activated cation channel yam8 (486 aa).

Residues M1–G24 form the signal peptide. The Extracellular segment spans residues A25–S464. 5 N-linked (GlcNAc...) asparagine glycosylation sites follow: N33, N49, N59, N82, and N93. Residues A465–V485 form a helical membrane-spanning segment. Residue E486 is a topological domain, cytoplasmic.

Its subcellular location is the cell membrane. In terms of biological role, calcium-permeable, cation-selective stretch-activated channel (SAC) that functions together with CCH1 to mediate calcium entry into cells. Required during mating. This is Stretch-activated cation channel yam8 from Schizosaccharomyces pombe (strain 972 / ATCC 24843) (Fission yeast).